Here is a 278-residue protein sequence, read N- to C-terminus: S-methyl-5'-thioadenosine phosphorylase (278 aa).

Phosphate contacts are provided by residues S13, 55–56, and 88–89; these read RH and TA. Substrate is bound at residue M190. T191 serves as a coordination point for phosphate. Position 214–216 (214–216) interacts with substrate; the sequence is DYD.

Belongs to the PNP/MTAP phosphorylase family. MTAP subfamily. Homotrimer.

Its subcellular location is the cytoplasm. It is found in the nucleus. It catalyses the reaction S-methyl-5'-thioadenosine + phosphate = 5-(methylsulfanyl)-alpha-D-ribose 1-phosphate + adenine. It participates in amino-acid biosynthesis; L-methionine biosynthesis via salvage pathway; S-methyl-5-thio-alpha-D-ribose 1-phosphate from S-methyl-5'-thioadenosine (phosphorylase route): step 1/1. Its function is as follows. Catalyzes the reversible phosphorylation of S-methyl-5'-thioadenosine (MTA) to adenine and 5-methylthioribose-1-phosphate. Involved in the breakdown of MTA, a major by-product of polyamine biosynthesis. Responsible for the first step in the methionine salvage pathway after MTA has been generated from S-adenosylmethionine. Has broad substrate specificity with 6-aminopurine nucleosides as preferred substrates. This chain is S-methyl-5'-thioadenosine phosphorylase, found in Anopheles gambiae (African malaria mosquito).